The sequence spans 149 residues: Dehydrin Rab15 (149 aa).

Positions 1-149 (MEFQGQHDNP…KIKEKLPGQH (149 aa)) are disordered. A compositionally biased stretch (basic and acidic residues) spans 78-93 (KEKIKEKLPGGHKDNQ). The span at 100–117 (TGTGGAYGPGTGTGGAYG) shows a compositional bias: gly residues. Over residues 132–149 (GEKKGIMDKIKEKLPGQH) the composition is skewed to basic and acidic residues.

This sequence belongs to the plant dehydrin family.

In Triticum aestivum (Wheat), this protein is Dehydrin Rab15 (RAB15).